We begin with the raw amino-acid sequence, 433 residues long: Glucose-1-phosphate adenylyltransferase (433 aa).

Residues Tyr-117, Gly-182, 197-198 (EK), and Ser-215 contribute to the alpha-D-glucose 1-phosphate site.

It belongs to the bacterial/plant glucose-1-phosphate adenylyltransferase family. As to quaternary structure, homotetramer.

The catalysed reaction is alpha-D-glucose 1-phosphate + ATP + H(+) = ADP-alpha-D-glucose + diphosphate. Its pathway is glycan biosynthesis; glycogen biosynthesis. In terms of biological role, involved in the biosynthesis of ADP-glucose, a building block required for the elongation reactions to produce glycogen. Catalyzes the reaction between ATP and alpha-D-glucose 1-phosphate (G1P) to produce pyrophosphate and ADP-Glc. The sequence is that of Glucose-1-phosphate adenylyltransferase from Nitrosomonas europaea (strain ATCC 19718 / CIP 103999 / KCTC 2705 / NBRC 14298).